Here is a 253-residue protein sequence, read N- to C-terminus: GTP cyclohydrolase III (253 aa).

Belongs to the archaeal-type GTP cyclohydrolase family.

It carries out the reaction GTP + 3 H2O = 2-amino-5-formylamino-6-(5-phospho-D-ribosylamino)pyrimidin-4(3H)-one + 2 phosphate + 2 H(+). Catalyzes the formation of 2-amino-5-formylamino-6-ribofuranosylamino-4(3H)-pyrimidinone ribonucleotide monophosphate and inorganic phosphate from GTP. Also has an independent pyrophosphate phosphohydrolase activity. This chain is GTP cyclohydrolase III, found in Natronomonas pharaonis (strain ATCC 35678 / DSM 2160 / CIP 103997 / JCM 8858 / NBRC 14720 / NCIMB 2260 / Gabara) (Halobacterium pharaonis).